The chain runs to 152 residues: Transcriptional regulator MraZ (152 aa).

2 consecutive SpoVT-AbrB domains span residues 5–52 and 81–124; these read ATLV…PLPE and ASEC…DETT.

It belongs to the MraZ family. As to quaternary structure, dodecamer.

It localises to the cytoplasm. The protein resides in the nucleoid. Negatively regulates its own expression and that of the subsequent genes in the proximal part of the division and cell wall (dcw) gene cluster. Acts by binding directly to DNA. May also regulate the expression of genes outside the dcw cluster. In Escherichia coli (strain K12), this protein is Transcriptional regulator MraZ.